The chain runs to 289 residues: Protease HtpX (289 aa).

2 helical membrane-spanning segments follow: residues 4–24 (IMLF…VLNI) and 36–56 (LSGL…ISLM). Histidine 143 is a Zn(2+) binding site. Residue glutamate 144 is part of the active site. Histidine 147 contributes to the Zn(2+) binding site. 2 consecutive transmembrane segments (helical) span residues 158-178 (LMQG…ANIV) and 192-212 (MVYF…ASFL). Glutamate 221 is a Zn(2+) binding site.

The protein belongs to the peptidase M48B family. Zn(2+) is required as a cofactor.

The protein localises to the cell inner membrane. The sequence is that of Protease HtpX from Vibrio campbellii (strain ATCC BAA-1116).